The primary structure comprises 193 residues: DNA dC-&gt;dU-editing enzyme APOBEC-3H (193 aa).

The CMP/dCMP-type deaminase domain occupies 24-126 (YRRKTYLCYQ…WKYQQGLRHL (103 aa)). Residue His-54 participates in Zn(2+) binding. Glu-56 (proton donor) is an active-site residue. 2 residues coordinate Zn(2+): Cys-85 and Cys-88.

It belongs to the cytidine and deoxycytidylate deaminase family. In terms of assembly, homodimer. Zn(2+) is required as a cofactor. Expressed in peripheral blood mononuclear cells.

The protein localises to the cytoplasm. The enzyme catalyses a 2'-deoxycytidine in single-stranded DNA + H2O + H(+) = a 2'-deoxyuridine in single-stranded DNA + NH4(+). Functionally, DNA deaminase (cytidine deaminase) which acts as an inhibitor of retrovirus replication and retrotransposon mobility via deaminase-dependent and -independent mechanisms. Selectively targets single-stranded DNA and does not deaminate double-stranded DNA or single- or double-stranded RNA. Exhibits single-stranded DNA deaminase activity (in vitro). Incorporates into the released virions of the virion infectivity factor (vif)-deficient feline immunodeficiency virus (FIV) and suppresses FIV infectivity, probably in a deaminase-dependent manner (in vitro). Induces G-to-A hypermutations in vif-deficient FIV (in vitro). The APOBEC3H/APOBEC3Z3 haplotype 5 exhibits antiviral activity against vif-proficient FIV, strains Petaluma, C36 and Shizuoka (in vitro). Does not exhibit inhibitory activity against feline leukemia virus (FeLV), feline endogenous retrovirus (RD-114 virus) or a long interspersed nuclear element-1 (LINE-1) retrotransposon (in vitro). The protein is DNA dC-&gt;dU-editing enzyme APOBEC-3H of Felis catus (Cat).